Here is a 123-residue protein sequence, read N- to C-terminus: Glycine cleavage system H protein (123 aa).

Residues 22–104 (VATVGITSYA…FGAGWLVKVR (83 aa)) enclose the Lipoyl-binding domain. Lysine 63 carries the post-translational modification N6-lipoyllysine.

It belongs to the GcvH family. In terms of assembly, the glycine cleavage system is composed of four proteins: P, T, L and H. It depends on (R)-lipoate as a cofactor.

The glycine cleavage system catalyzes the degradation of glycine. The H protein shuttles the methylamine group of glycine from the P protein to the T protein. The chain is Glycine cleavage system H protein from Clavibacter sepedonicus (Clavibacter michiganensis subsp. sepedonicus).